Reading from the N-terminus, the 477-residue chain is Glycogen synthase (477 aa).

ADP-alpha-D-glucose is bound at residue Lys-15.

The protein belongs to the glycosyltransferase 1 family. Bacterial/plant glycogen synthase subfamily.

The catalysed reaction is [(1-&gt;4)-alpha-D-glucosyl](n) + ADP-alpha-D-glucose = [(1-&gt;4)-alpha-D-glucosyl](n+1) + ADP + H(+). The protein operates within glycan biosynthesis; glycogen biosynthesis. Synthesizes alpha-1,4-glucan chains using ADP-glucose. This Streptococcus pneumoniae (strain Hungary19A-6) protein is Glycogen synthase.